We begin with the raw amino-acid sequence, 317 residues long: Forkhead box protein B2 (317 aa).

The segment at residues 13–107 is a DNA-binding region (fork-head); the sequence is KPPYSYISLT…ENGSFLRRRK (95 aa).

As to expression, first expressed within the dorsolateral ectoderm, except for the organizer territory. During gastrulation, expressed in 2 ectodermal stripes adjacent to the dorsal midline. With the onset of neurulation, expression shifts first to the neural plate before settling on the bottom of the neural tube, on top of the notochord. Expression is then absent until stage 35, at which stage a pair of cells in the fourth rhombomere in the dorsolateral outer area of the rhombencephalon show expression. This is followed shortly afterwards by expression in a pair of cells in rhombomere 6 at the ventricular side of the rhombencephalon.

The protein resides in the nucleus. Transcription factor. This Xenopus laevis (African clawed frog) protein is Forkhead box protein B2.